A 329-amino-acid polypeptide reads, in one-letter code: GTP 3',8-cyclase (329 aa).

The Radical SAM core domain occupies 1-229 (MNPVDYLRIS…ESTIKGNGPA (229 aa)). Arg8 provides a ligand contact to GTP. 2 residues coordinate [4Fe-4S] cluster: Cys15 and Cys19. Residue Tyr21 coordinates S-adenosyl-L-methionine. Position 22 (Cys22) interacts with [4Fe-4S] cluster. Arg60 serves as a coordination point for GTP. Gly64 provides a ligand contact to S-adenosyl-L-methionine. Thr91 is a binding site for GTP. Residue Ser115 coordinates S-adenosyl-L-methionine. Lys155 contacts GTP. Met189 is an S-adenosyl-L-methionine binding site. Positions 252 and 255 each coordinate [4Fe-4S] cluster. Residue 257-259 (RMR) participates in GTP binding. Cys269 contributes to the [4Fe-4S] cluster binding site.

The protein belongs to the radical SAM superfamily. MoaA family. Monomer and homodimer. [4Fe-4S] cluster serves as cofactor.

It catalyses the reaction GTP + AH2 + S-adenosyl-L-methionine = (8S)-3',8-cyclo-7,8-dihydroguanosine 5'-triphosphate + 5'-deoxyadenosine + L-methionine + A + H(+). It participates in cofactor biosynthesis; molybdopterin biosynthesis. In terms of biological role, catalyzes the cyclization of GTP to (8S)-3',8-cyclo-7,8-dihydroguanosine 5'-triphosphate. This chain is GTP 3',8-cyclase, found in Rippkaea orientalis (strain PCC 8801 / RF-1) (Cyanothece sp. (strain PCC 8801)).